The primary structure comprises 847 residues: MNKTTEYIDALLLSEREKAALPKTDIRAVHQALDAEHRTYSREDDSPQGSVKARLEHAWPDSLAKGQLIKDDEGRDQLQAMPKATRSSMFPDPWRTNPVGRFWDRLRGRDVTPRYVSRLTKEEQASEQKWRTVGTIRRYILLILTLAQTVVATWYMKTILPYQGWALINPMDMVGQDIWVSFMQLLPYMLQTGILILFAVLFCWVSAGFWTALMGFLQLLIGRDKYSISASTVGDEPLNPEHQTALIMPICNEDVSRVFAGLRATWESVKATGNAAHFDVYILSDSYNPDICVAEQKAWMELIAEVQGEGQIFYRRRRRRMKRKSGNIDDFCRRWGNQYSYMVVLDADSVMSGECLSGLVRLMEANPNAGIIQSSPKASGMDTLYARCQQFATRVYGPLFTAGLHFWQLGESHYWGHNAIIRVKPFIEHCALAPLPGEGSFAGSILSHDFVEAALMRRAGWGVWIAYDLPGSYEELPPNLLDELKRDRRWCHGNLMNFRLFLVKGMHPVHRAVFLTGVMSYLSAPLWFMFLALSTALQVVHALTEPQYFLQPRQLFPVWPQWRPELAIALFASTMVLLFLPKLLSIMLIWCKGTKEYGGFWRVTLSLLLEVLFSVLLAPVRMLFHTVFVVSAFLGWEVVWNSPQRDDDSTPWGEAFMRHGSQLLLGLVWAVGMAWLDLRFLFWLAPIVFSLILSPFVSVISSRSTVGLRTKRWKLFLIPEEYSPPQVLVDTDKYLEMNRRRILDDGFMHAVFNPSLNALATAMATARHRASKVLEIARDRHVEQALNETPEKLNRDRRLVLLSDPVTMARLHYRVWNAPERYSSWVNHYQSLVLNPQALQGRTSSAG.

Topologically, residues 1 to 138 (MNKTTEYIDA…KWRTVGTIRR (138 aa)) are cytoplasmic. Residues 139–156 (YILLILTLAQTVVATWYM) form a helical membrane-spanning segment. The Periplasmic segment spans residues 157–193 (KTILPYQGWALINPMDMVGQDIWVSFMQLLPYMLQTG). The chain crosses the membrane as a helical span at residues 194-216 (ILILFAVLFCWVSAGFWTALMGF). Residues 217 to 511 (LQLLIGRDKY…LVKGMHPVHR (295 aa)) lie on the Cytoplasmic side of the membrane. The helical transmembrane segment at 512–534 (AVFLTGVMSYLSAPLWFMFLALS) threads the bilayer. Residues 535–567 (TALQVVHALTEPQYFLQPRQLFPVWPQWRPELA) are Periplasmic-facing. Residues 568–590 (IALFASTMVLLFLPKLLSIMLIW) form a helical membrane-spanning segment. At 591 to 602 (CKGTKEYGGFWR) the chain is on the cytoplasmic side. The chain crosses the membrane as a helical span at residues 603-625 (VTLSLLLEVLFSVLLAPVRMLFH). The Periplasmic portion of the chain corresponds to 626-679 (TVFVVSAFLGWEVVWNSPQRDDDSTPWGEAFMRHGSQLLLGLVWAVGMAWLDLR). The helical transmembrane segment at 680–702 (FLFWLAPIVFSLILSPFVSVISS) threads the bilayer. Over 703 to 847 (RSTVGLRTKR…ALQGRTSSAG (145 aa)) the chain is Cytoplasmic.

Belongs to the glycosyltransferase 2 family. OpgH subfamily.

Its subcellular location is the cell inner membrane. The protein operates within glycan metabolism; osmoregulated periplasmic glucan (OPG) biosynthesis. In terms of biological role, involved in the biosynthesis of osmoregulated periplasmic glucans (OPGs). This is Glucans biosynthesis glucosyltransferase H from Salmonella typhi.